Here is a 77-residue protein sequence, read N- to C-terminus: MDSTNVRSGMKSRKKKPKTTVIDDDDDCMTCSACQSKLVKISDITKVSLDYINTMRGNTLACAACGSSLKLLNDFAS.

The protein belongs to the orthopoxvirus OPG146 family. In terms of assembly, interacts with capping enzyme RAP94/OPG109, the two large RNA polymerase subunits RPO147/OPG105 and RPO132/OPG151, the two early transcription factor subunits OPG185 and OPG133, one of the capping enzyme subunits OPG113, the nucleoside triphosphate phosphohydrolase OPG123, two core proteins OPG129 and OPG138, and a virion protein OPG064.

Its subcellular location is the virion. It is found in the host cytoplasm. The protein resides in the host nucleus. Its function is as follows. Plays a role in the maturation of immature virions to infectious particles. May also participate in viral transcription. The polypeptide is Protein OPG146 (OPG146) (Homo sapiens (Human)).